The following is an 80-amino-acid chain: uncharacterized protein (80 aa).

4Fe-4S ferredoxin-type domains lie at 21-49 (KIIE…AIKN) and 50-80 (NRVV…LYDA). Residues Cys30, Cys33, Cys36, Cys40, Cys60, Cys63, Cys66, and Cys70 each coordinate [4Fe-4S] cluster.

It depends on [4Fe-4S] cluster as a cofactor.

This is an uncharacterized protein from Methanocaldococcus jannaschii (strain ATCC 43067 / DSM 2661 / JAL-1 / JCM 10045 / NBRC 100440) (Methanococcus jannaschii).